A 78-amino-acid chain; its full sequence is Large ribosomal subunit protein bL28 (78 aa).

A disordered region spans residues methionine 1–tryptophan 29.

This sequence belongs to the bacterial ribosomal protein bL28 family.

The sequence is that of Large ribosomal subunit protein bL28 from Corynebacterium glutamicum (strain ATCC 13032 / DSM 20300 / JCM 1318 / BCRC 11384 / CCUG 27702 / LMG 3730 / NBRC 12168 / NCIMB 10025 / NRRL B-2784 / 534).